Here is a 432-residue protein sequence, read N- to C-terminus: Adenylosuccinate synthetase (432 aa).

Residues G13 to K19 and G41 to T43 each bind GTP. Catalysis depends on D14, which acts as the Proton acceptor. Positions 14 and 41 each coordinate Mg(2+). IMP is bound by residues D14–K17, N39–H42, T130, R144, Q225, T240, and R304. H42 functions as the Proton donor in the catalytic mechanism. A300–R306 contacts substrate. Residues R306, K332–D334, and S415–G417 each bind GTP.

The protein belongs to the adenylosuccinate synthetase family. As to quaternary structure, homodimer. The cofactor is Mg(2+).

It localises to the cytoplasm. It carries out the reaction IMP + L-aspartate + GTP = N(6)-(1,2-dicarboxyethyl)-AMP + GDP + phosphate + 2 H(+). It participates in purine metabolism; AMP biosynthesis via de novo pathway; AMP from IMP: step 1/2. Functionally, plays an important role in the de novo pathway of purine nucleotide biosynthesis. Catalyzes the first committed step in the biosynthesis of AMP from IMP. The polypeptide is Adenylosuccinate synthetase (Enterobacter sp. (strain 638)).